A 357-amino-acid polypeptide reads, in one-letter code: MRKRIGILTSGGDCPGLNCVIRAVVSHATLTYDWEVLGIPYATQGLRERQAIALNMHGWDLRGIDPLLNMGGTILGTINKGDTLAHVDEMLASYQALALDALIVIGGDGSLGILHELASRGNWNLVAIPKTIDNDVALTERAVGFDTAVNTIVDALNRLTFTAASHDRVMIVEVMGRSAGHLALHAGIAGGADVILIPEISYTISGLCQHIAELRDRWQRKFAIVVVAEGAKLCLEDVQENIASSCAPSKCGRGQYIADQIAQCSKNLIDTRVSVLGHIQRGGIPSALDRLTATVFGKTAVDLIAQGKFGQMVAWQNGEAIPVPIQDVVAQSPLHVNPQGSLVQSARCLGIYVGEKT.

ATP contacts are provided by residues glycine 12, 80-81 (KG), and 107-110 (GDGS). Position 108 (aspartate 108) interacts with Mg(2+). Substrate-binding positions include 131-133 (TID), arginine 168, 175-177 (MGR), glutamate 229, arginine 272, and 278-281 (HIQR). Aspartate 133 functions as the Proton acceptor in the catalytic mechanism.

The protein belongs to the phosphofructokinase type A (PFKA) family. Mixed-substrate PFK group III subfamily. As to quaternary structure, homodimer or homotetramer. Mg(2+) serves as cofactor.

It is found in the cytoplasm. The catalysed reaction is beta-D-fructose 6-phosphate + ATP = beta-D-fructose 1,6-bisphosphate + ADP + H(+). It participates in carbohydrate degradation; glycolysis; D-glyceraldehyde 3-phosphate and glycerone phosphate from D-glucose: step 3/4. Its activity is regulated as follows. Subject to allosteric activation by ADP and other diphosphonucleosides, and inhibition by phosphoenolpyruvate. Its function is as follows. Catalyzes the phosphorylation of D-fructose 6-phosphate to fructose 1,6-bisphosphate by ATP, the first committing step of glycolysis. The polypeptide is ATP-dependent 6-phosphofructokinase 2 (Nostoc sp. (strain PCC 7120 / SAG 25.82 / UTEX 2576)).